The primary structure comprises 329 residues: GTP 3',8-cyclase (329 aa).

Residues 8–234 enclose the Radical SAM core domain; the sequence is AFARKFYYLR…QLRQRSDGPA (227 aa). Residue Arg-17 participates in GTP binding. [4Fe-4S] cluster is bound by residues Cys-24 and Cys-28. Tyr-30 provides a ligand contact to S-adenosyl-L-methionine. Cys-31 contributes to the [4Fe-4S] cluster binding site. A GTP-binding site is contributed by Arg-68. Residue Gly-72 participates in S-adenosyl-L-methionine binding. Thr-99 lines the GTP pocket. An S-adenosyl-L-methionine-binding site is contributed by Ser-123. Lys-160 is a binding site for GTP. S-adenosyl-L-methionine is bound at residue Met-194. [4Fe-4S] cluster contacts are provided by Cys-257 and Cys-260. 262–264 is a GTP binding site; it reads RLR. Cys-274 contacts [4Fe-4S] cluster.

This sequence belongs to the radical SAM superfamily. MoaA family. In terms of assembly, monomer and homodimer. It depends on [4Fe-4S] cluster as a cofactor.

It carries out the reaction GTP + AH2 + S-adenosyl-L-methionine = (8S)-3',8-cyclo-7,8-dihydroguanosine 5'-triphosphate + 5'-deoxyadenosine + L-methionine + A + H(+). It participates in cofactor biosynthesis; molybdopterin biosynthesis. Its function is as follows. Catalyzes the cyclization of GTP to (8S)-3',8-cyclo-7,8-dihydroguanosine 5'-triphosphate. This Salmonella newport (strain SL254) protein is GTP 3',8-cyclase.